The primary structure comprises 271 residues: Tryptophan synthase alpha chain (271 aa).

Residues E49 and D60 each act as proton acceptor in the active site.

This sequence belongs to the TrpA family. As to quaternary structure, tetramer of two alpha and two beta chains.

The catalysed reaction is (1S,2R)-1-C-(indol-3-yl)glycerol 3-phosphate + L-serine = D-glyceraldehyde 3-phosphate + L-tryptophan + H2O. The protein operates within amino-acid biosynthesis; L-tryptophan biosynthesis; L-tryptophan from chorismate: step 5/5. Its function is as follows. The alpha subunit is responsible for the aldol cleavage of indoleglycerol phosphate to indole and glyceraldehyde 3-phosphate. This chain is Tryptophan synthase alpha chain, found in Burkholderia lata (strain ATCC 17760 / DSM 23089 / LMG 22485 / NCIMB 9086 / R18194 / 383).